The following is a 99-amino-acid chain: Bublin coiled-coil protein (99 aa).

Positions 34 to 71 (LDQINSCLDDIEERNDALNGKLQELLESNRAARRDFRQ) form a coiled coil. Residues 66-78 (RRDFRQQITDHAD) show a composition bias toward basic and acidic residues. Positions 66–99 (RRDFRQQITDHADLPPPANDDDEDEQSRDAQKKD) are disordered.

The protein belongs to the UPF0184 (EST00098) family.

Its subcellular location is the cell junction. It is found in the cytoplasm. It localises to the cytoskeleton. Essential for intermediate filament organization in intestinal cells, interacts with intermediate filament and regulates intestinal lumen morphology. This Danio rerio (Zebrafish) protein is Bublin coiled-coil protein (bbln).